A 159-amino-acid polypeptide reads, in one-letter code: Transmembrane protein 89 (159 aa).

Positions 1-24 (MLHVLASLPLLLLLVTSASTHAWS) are cleaved as a signal peptide. The Extracellular portion of the chain corresponds to 25–63 (RPLWYQVGLDLQPWGCQPKSVEGCRGGLSCPGYWLGPGA). Residues 64-86 (SRIYPVAAVMITTTMLMICRKIL) traverse the membrane as a helical segment. Topologically, residues 87–159 (QGRRRSQATK…QIKGTSTQSG (73 aa)) are cytoplasmic. The interval 91–110 (RSQATKGEHPQVTTEPCGPW) is disordered.

Its subcellular location is the membrane. This is Transmembrane protein 89 (TMEM89) from Homo sapiens (Human).